The chain runs to 756 residues: Serine/threonine-protein kinase DCLK1 (756 aa).

Phosphoserine is present on residues Ser32 and Ser36. Position 46 is a phosphothreonine (Thr46). 2 consecutive Doublecortin domains span residues 57–143 (KKVR…LEYT) and 186–269 (KLVT…QDDF). The segment at 288 to 393 (ASASRRGTTK…QRGWRREESE (106 aa)) is disordered. Residues 297-313 (KSPGPSRRSKSPASTSS) show a composition bias toward low complexity. A phosphoserine mark is found at Ser305, Ser307, Ser330, Ser332, Ser334, Ser337, Ser347, Ser352, Ser353, Ser355, Ser358, Cys362, and Ser364. Positions 347-364 (SQHGGSSTSLSSTKVCSS) are enriched in low complexity. A compositionally biased stretch (acidic residues) spans 366–375 (DENDGPGEGD). Ser392 bears the Phosphoserine mark. Positions 406-663 (YKVGRTIGDG…AVQVLEHPWV (258 aa)) constitute a Protein kinase domain. Residues 412–420 (IGDGNFAVV) and Lys435 contribute to the ATP site. Asp527 functions as the Proton acceptor in the catalytic mechanism. Tyr536 bears the Phosphotyrosine mark. Residues 711 to 723 (QVFRRRRNQDVRS) are compositionally biased toward basic and acidic residues. A disordered region spans residues 711-756 (QVFRRRRNQDVRSRYKAQPAPPELNSESEDYSPSSSETVRSPNSPF). Ser742, Ser751, and Ser754 each carry phosphoserine.

Belongs to the protein kinase superfamily. CAMK Ser/Thr protein kinase family. CaMK subfamily.

It catalyses the reaction L-seryl-[protein] + ATP = O-phospho-L-seryl-[protein] + ADP + H(+). It carries out the reaction L-threonyl-[protein] + ATP = O-phospho-L-threonyl-[protein] + ADP + H(+). In terms of biological role, probable kinase that may be involved in a calcium-signaling pathway controlling neuronal migration in the developing brain. May also participate in functions of the mature nervous system. The sequence is that of Serine/threonine-protein kinase DCLK1 (Dclk1) from Mus musculus (Mouse).